We begin with the raw amino-acid sequence, 351 residues long: Dihydroorotate dehydrogenase (quinone) (351 aa).

Residues 61-65 (AGLDK) and Thr-85 each bind FMN. Lys-65 is a binding site for substrate. Residue 110–114 (NRMGF) participates in substrate binding. Residues Asn-139 and Asn-172 each contribute to the FMN site. Residue Asn-172 coordinates substrate. Ser-175 acts as the Nucleophile in catalysis. A substrate-binding site is contributed by Asn-177. 2 residues coordinate FMN: Lys-217 and Thr-245. Residue 246–247 (NT) coordinates substrate. FMN-binding positions include Gly-268, Gly-297, and 318-319 (YT).

Belongs to the dihydroorotate dehydrogenase family. Type 2 subfamily. In terms of assembly, monomer. It depends on FMN as a cofactor.

The protein localises to the cell membrane. The enzyme catalyses (S)-dihydroorotate + a quinone = orotate + a quinol. Its pathway is pyrimidine metabolism; UMP biosynthesis via de novo pathway; orotate from (S)-dihydroorotate (quinone route): step 1/1. Catalyzes the conversion of dihydroorotate to orotate with quinone as electron acceptor. In Xylella fastidiosa (strain 9a5c), this protein is Dihydroorotate dehydrogenase (quinone).